The sequence spans 1514 residues: Polycomb group protein ASXL1 (1514 aa).

One can recognise an HTH HARE-type domain in the interval 11–86 (RTWAEAARLV…RISLFTLKKD (76 aa)). Disordered stretches follow at residues 95 to 170 (ATVD…VMLP) and 183 to 249 (HVEP…RGEE). Residues 98–107 (DGDEPEDSAD) show a composition bias toward acidic residues. Over residues 111–145 (CGSNEASTVSGENDVSLDETSSNASCSTESQSRPL) the composition is skewed to polar residues. A compositionally biased stretch (low complexity) spans 199–209 (SGSPSSSSSGS). Residues 243-246 (KRNR) are interaction with nucleosomal DNA forming a DNA clamp with BAP1. The 110-residue stretch at 255–364 (PGSILVNTNL…FEDYYGQKLG (110 aa)) folds into the DEUBAD domain. The LXXLL motif 1 signature appears at 284–288 (LLLLL). The interval 300 to 655 (LLRLSGSALN…GGGSGAIDEG (356 aa)) is interaction with NCOA1. The short motif at 310–315 (NEFFTH) is the NEF motif element. The tract at residues 336–346 (RLRQEMEKEKK) is interaction with nucleosomal DNA. 5 disordered regions span residues 378-543 (EEAK…EDRQ), 635-823 (TTAI…FDNM), 895-914 (SDPESRENIPCPEPQDEKEW), 926-952 (SVPQPESCISHWTPPPAAVGSTGSDSE), and 964-995 (ISEAPSPHSESTDTASDSEGHLSEDSSEVDAS). The Nuclear localization signal motif lies at 408–415 (FKKRSRPD). Residues 458–473 (VNSTPGPDVSSATSGQ) are compositionally biased toward polar residues. Residues serine 498 and serine 500 each carry the phosphoserine modification. 2 stretches are compositionally biased toward basic and acidic residues: residues 514–525 (QETKDQKRKSFE) and 533–543 (PEKKPRLEDRQ). Over residues 638-654 (IGGGGGPGGGGSGAIDE) the composition is skewed to gly residues. The segment covering 678 to 692 (PSTSGESASDLQRTQ) has biased composition (polar residues). Basic and acidic residues-rich tracts occupy residues 713 to 728 (ARREDSASLRKEESCL) and 779 to 793 (LLDDRTECESSREDQ). The LXXLL motif 2 signature appears at 808–812 (LGDLL). Polar residues predominate over residues 971–980 (HSESTDTASD). Residues 1082-1087 (LVMHLL) are required for interaction with RARA. Disordered stretches follow at residues 1095–1131 (KVLPPGHRSSRLESSQLPLREQSQDRGTLQGTGENNR), 1213–1234 (EQKEGHSLSQGSDPGAAPGQCL), and 1256–1338 (SEQT…VSAD). Polar residues predominate over residues 1119–1129 (DRGTLQGTGEN). Composition is skewed to polar residues over residues 1256–1269 (SEQTDGTLSDQNNA) and 1313–1324 (SKNSVSGGVQTT). A PHD-type; atypical zinc finger spans residues 1476-1513 (SLQCACSLKAMIMCQGCGAFCHDDCIGPSKLCVLCLVV).

Belongs to the Asx family. As to quaternary structure, core component of the polycomb repressive deubiquitinase (PR-DUB) complex, at least composed of BAP1, one of ASXL1, ASXL2 or (probably) ASXL3, and one of MBD5 or MBD6. Distinct combinations of ASXL and MBD proteins may preferentially bind specific histone modification marks. The PR-DUB core associates with a number of accessory proteins, including FOXK1, FOXK2, KDM1B, HCFC1 and OGT; KDM1B specifically associates with ASXL2 PR-DUB complexes. Interacts (via DEUBAD domain) with BAP1 (via ULD domain); the interaction is direct and forms a ubiquitin binding cleft. The interaction with BAP1 is important for maintaining BAP1 stability. Together with BAP1, associates (via DEUBAD domain) with nucleosomes; interacts with nucleosomal DNA and stabilizes the orientation of the nucleosome to line up the PR-DUB complex active site with its H2AK118ub1 substrate. Interacts (via PHD domain) with MBD5 and MBD6 (via MBD domain); the interaction is probably direct and mediates association of MBD proteins with the PR-DUB core. Interacts with RARA, RXRA. Interacts with NCOA1. Interacts with PPARA and PPARG. Post-translationally, ubiquitinated by TRIP12, leading to its subsequent degradation following binding of N(6)-methyladenine methylated DNA (6mA).

It localises to the nucleus. Its function is as follows. Probable Polycomb group (PcG) protein involved in transcriptional regulation mediated by ligand-bound nuclear hormone receptors, such as retinoic acid receptors (RARs) and peroxisome proliferator-activated receptor gamma (PPARG). Acts as a coactivator of RARA and RXRA through association with NCOA1. Acts as a corepressor for PPARG and suppresses its adipocyte differentiation-inducing activity. Non-catalytic component of the PR-DUB complex, a complex that specifically mediates deubiquitination of histone H2A monoubiquitinated at 'Lys-119' (H2AK119ub1). Acts as a sensor of N(6)-methyladenine methylation on DNA (6mA): recognizes and binds 6mA DNA, leading to its ubiquitination and degradation by TRIP12, thereby inactivating the PR-DUB complex and regulating Polycomb silencing. The PR-DUB complex is an epigenetic regulator of gene expression and acts as a transcriptional coactivator, affecting genes involved in development, cell communication, signaling, cell proliferation and cell viability. ASXL1, ASXL2 and ASXL3 function redundantly in the PR-DUB complex. The ASXL proteins are essential for chromatin recruitment and transcriptional activation of associated genes. ASXL1 and ASXL2 are important for BAP1 protein stability. Together with BAP1, negatively regulates epithelial-mesenchymal transition (EMT) of trophoblast stem cells during placental development by regulating genes involved in epithelial cell integrity, cell adhesion and cytoskeletal organization. The polypeptide is Polycomb group protein ASXL1 (Asxl1) (Mus musculus (Mouse)).